Reading from the N-terminus, the 289-residue chain is HTH-type transcriptional regulator SoxR (289 aa).

Residues 1–58 (MEIKDLQIFQKVVEYGSVSKAAKSLNYVQSYVTVRIQKLEEELQTELFHRSSRGMVLN) form the HTH lysR-type domain. The segment at residues 18-37 (VSKAAKSLNYVQSYVTVRIQ) is a DNA-binding region (H-T-H motif).

Belongs to the LysR transcriptional regulatory family.

Its function is as follows. Transcriptional repressor of soxA gene expression. The polypeptide is HTH-type transcriptional regulator SoxR (soxR) (Arthrobacter sp. (strain TE1826)).